The sequence spans 98 residues: NADH-ubiquinone oxidoreductase chain 4L (98 aa).

Helical transmembrane passes span 1–21, 28–48, and 59–79; these read MMSISLNLTMAFLLALAGVLI, STLLCLEGMMLSLFILMALLI, and APLILLVFSACEAGVGLALLV.

It belongs to the complex I subunit 4L family. As to quaternary structure, core subunit of respiratory chain NADH dehydrogenase (Complex I) which is composed of 45 different subunits.

The protein localises to the mitochondrion inner membrane. The enzyme catalyses a ubiquinone + NADH + 5 H(+)(in) = a ubiquinol + NAD(+) + 4 H(+)(out). In terms of biological role, core subunit of the mitochondrial membrane respiratory chain NADH dehydrogenase (Complex I) which catalyzes electron transfer from NADH through the respiratory chain, using ubiquinone as an electron acceptor. Part of the enzyme membrane arm which is embedded in the lipid bilayer and involved in proton translocation. This chain is NADH-ubiquinone oxidoreductase chain 4L (MT-ND4L), found in Osphranter robustus (Wallaroo).